The following is a 556-amino-acid chain: Optineurin (556 aa).

The disordered stretch occupies residues 1–33 (MSSKPQIRPAENGEHCRSKMENGMDSMAPPTLS). Positions 11–22 (ENGEHCRSKMEN) are enriched in basic and acidic residues. A coiled-coil region spans residues 38-164 (EEMVQQMKEL…SELQVKLNIA (127 aa)). The LIR signature appears at 168-173 (DSFVEI). The stretch at 219-487 (VSQLLCCLRN…LLKEQQNLED (269 aa)) forms a coiled coil. The disordered stretch occupies residues 245 to 274 (ERLSKMENETSNCLESGTQTNQEEESSEAI). Residues 253-265 (ETSNCLESGTQTN) are compositionally biased toward polar residues. A UBAN motif is present at residues 453–458 (DFHAER). The tract at residues 496–524 (MQNRHGARAPDREHSPRLVQRGTGSQEWP) is disordered. The CCHC NOA-type zinc-finger motif lies at 526–556 (QRNISIYSCPKCEEILPDLDTLQIHVMDCIN). Zn(2+) contacts are provided by cysteine 534, cysteine 537, histidine 550, and cysteine 554.

As to quaternary structure, binds to linear ubiquitin chains. Interacts with LC3 family members. Expressed in erythrocytes, skeletal muscle, heart, spleen and brain. Weakly expressed in lung and liver (at protein level).

It is found in the cytoplasm. Its subcellular location is the perinuclear region. The protein resides in the golgi apparatus. The protein localises to the trans-Golgi network. It localises to the cytoplasmic vesicle. It is found in the recycling endosome. Its subcellular location is the autophagosome. In terms of biological role, probably part of the TNF-alpha signaling pathway that can shift the equilibrium toward induction of cell death. May act by regulating membrane trafficking and cellular morphogenesis. May act as autophagy receptor that interacts directly with both the cargo to become degraded and an autophagy modifier of the MAP1 LC3 family. The protein is Optineurin (OPTN) of Gallus gallus (Chicken).